The following is a 127-amino-acid chain: Glycine cleavage system H protein (127 aa).

Positions glutamate 22–glutamate 104 constitute a Lipoyl-binding domain. Lysine 63 bears the N6-lipoyllysine mark.

This sequence belongs to the GcvH family. In terms of assembly, the glycine cleavage system is composed of four proteins: P, T, L and H. The cofactor is (R)-lipoate.

Functionally, the glycine cleavage system catalyzes the degradation of glycine. The H protein shuttles the methylamine group of glycine from the P protein to the T protein. Its function is as follows. Is also involved in protein lipoylation via its role as an octanoyl/lipoyl carrier protein intermediate. The protein is Glycine cleavage system H protein of Bacillus cereus (strain B4264).